We begin with the raw amino-acid sequence, 148 residues long: Large ribosomal subunit protein uL15 (148 aa).

Residues 1–30 (MSTHKKKTRKLRGHVSHGHGRIGKHRKHPG) show a composition bias toward basic residues. Residues 1-37 (MSTHKKKTRKLRGHVSHGHGRIGKHRKHPGGRGNAGG) form a disordered region.

It belongs to the universal ribosomal protein uL15 family.

In Tenebrio molitor (Yellow mealworm beetle), this protein is Large ribosomal subunit protein uL15 (RpL27A).